A 428-amino-acid chain; its full sequence is Histidine--tRNA ligase (428 aa).

It belongs to the class-II aminoacyl-tRNA synthetase family. In terms of assembly, homodimer.

It localises to the cytoplasm. It carries out the reaction tRNA(His) + L-histidine + ATP = L-histidyl-tRNA(His) + AMP + diphosphate + H(+). This Bordetella pertussis (strain Tohama I / ATCC BAA-589 / NCTC 13251) protein is Histidine--tRNA ligase.